The primary structure comprises 166 residues: uncharacterized protein (166 aa).

The may interact with smn1 stretch occupies residues 1-58 (MSSEITEGDLQKFHDEHFNAKAVNLWNVAFAQNDRGGNSESANVEYTQSVERYPDGTI).

As to quaternary structure, part of the core SMN complex at least composed of smn1, yip11/gem2, gem6, gem7 and gem8. Interacts with smn1; the interaction is direct. Interacts with gem7; the interaction is direct.

The protein localises to the cytoplasm. It is found in the nucleus. In terms of biological role, the SMN complex catalyzes the assembly of small nuclear ribonucleoproteins (snRNPs), the building blocks of the spliceosome, and thereby plays an important role in the splicing of cellular pre-mRNAs. Most spliceosomal snRNPs contain a common set of Sm proteins SNRPB, SNRPD1, SNRPD2, SNRPD3, SNRPE, SNRPF and SNRPG that assemble in a heptameric protein ring on the Sm site of the small nuclear RNA to form the core snRNP (Sm core). In the cytosol, the Sm proteins SNRPD1, SNRPD2, SNRPE, SNRPF and SNRPG are trapped in an inactive 6S pICln-Sm complex by the chaperone CLNS1A that controls the assembly of the core snRNP. To assemble core snRNPs, the SMN complex accepts the trapped 5Sm proteins from CLNS1A forming an intermediate. Binding of snRNA inside 5Sm triggers eviction of the SMN complex, thereby allowing binding of SNRPD3 and SNRPB to complete assembly of the core snRNP. This is an uncharacterized protein from Schizosaccharomyces pombe (strain 972 / ATCC 24843) (Fission yeast).